Consider the following 222-residue polypeptide: 7-cyano-7-deazaguanine synthase (222 aa).

An ATP-binding site is contributed by 8 to 18 (LSGGMDSTTLA). The Zn(2+) site is built by cysteine 188, cysteine 196, cysteine 199, and cysteine 202.

It belongs to the QueC family. Zn(2+) serves as cofactor.

The catalysed reaction is 7-carboxy-7-deazaguanine + NH4(+) + ATP = 7-cyano-7-deazaguanine + ADP + phosphate + H2O + H(+). It participates in purine metabolism; 7-cyano-7-deazaguanine biosynthesis. Functionally, catalyzes the ATP-dependent conversion of 7-carboxy-7-deazaguanine (CDG) to 7-cyano-7-deazaguanine (preQ(0)). In Methanoculleus marisnigri (strain ATCC 35101 / DSM 1498 / JR1), this protein is 7-cyano-7-deazaguanine synthase.